A 53-amino-acid polypeptide reads, in one-letter code: UPF0391 membrane protein YPDSF_3201 (53 aa).

Helical transmembrane passes span 4–24 (WGII…GGLA) and 27–47 (AAWA…ISLF).

Belongs to the UPF0391 family.

It is found in the cell membrane. The sequence is that of UPF0391 membrane protein YPDSF_3201 from Yersinia pestis (strain Pestoides F).